The sequence spans 604 residues: Linalool synthase Tps-5073L4, chloroplastic (604 aa).

The N-terminal 36 residues, 1–36, are a transit peptide targeting the chloroplast; the sequence is MSSMRIYVAIMKKPSVKHVDYVDKKASKPSWRVSSS. Positions 323, 360, 364, 501, and 504 each coordinate (2E)-geranyl diphosphate. 2 residues coordinate Mg(2+): D360 and D364. Residues 360–364 carry the DDXXD motif motif; sequence DDVYD. D504, T508, and E512 together coordinate Mg(2+).

Belongs to the terpene synthase family. Tpsb subfamily. Monomer. Mg(2+) is required as a cofactor. The cofactor is Mn(2+).

It is found in the plastid. It localises to the chloroplast. The catalysed reaction is (2E)-geranyl diphosphate + H2O = linalool + diphosphate. Its pathway is secondary metabolite biosynthesis; terpenoid biosynthesis. In terms of biological role, monoterpene synthase (mono-TPS) involved in the biosynthesis of monoterpenes natural products. Catalyzes the conversion of (2E)-geranyl diphosphate (GPP) into linalool. This Perilla frutescens (Beefsteak mint) protein is Linalool synthase Tps-5073L4, chloroplastic.